The primary structure comprises 317 residues: Adenine deaminase (317 aa).

Zn(2+)-binding residues include histidine 14, histidine 16, and histidine 194. The Proton donor role is filled by glutamate 197. Aspartate 275 is a Zn(2+) binding site. Aspartate 276 is a substrate binding site.

Belongs to the metallo-dependent hydrolases superfamily. Adenosine and AMP deaminases family. Adenine deaminase type 2 subfamily. Zn(2+) is required as a cofactor.

The enzyme catalyses adenine + H2O + H(+) = hypoxanthine + NH4(+). In terms of biological role, catalyzes the hydrolytic deamination of adenine to hypoxanthine. Plays an important role in the purine salvage pathway and in nitrogen catabolism. In Pseudomonas syringae pv. syringae (strain B728a), this protein is Adenine deaminase.